Consider the following 2382-residue polypeptide: Highly reducing polyketide synthase srdA (2382 aa).

Residues 1-25 form a disordered region; sequence MAPHSTLDSDYSSGSSTPTSASAAG. One can recognise a Ketosynthase family 3 (KS3) domain in the interval 44-474; it reads QEPIAIIGMG…GANAHAILEA (431 aa). Catalysis depends on for beta-ketoacyl synthase activity residues Cys-217, His-352, and His-390. A malonyl-CoA:ACP transacylase (MAT) domain region spans residues 580–891; sequence VFTGQGAQWP…HYGSALSRGK (312 aa). The active-site For malonyltransferase activity is the Ser-672. The tract at residues 971-1108 is N-terminal hotdog fold; that stretch reads HDLLGSQVHG…GLVKIDSAPA (138 aa). The segment at 971-1274 is dehydratase (DH) domain; that stretch reads HDLLGSQVHG…RQVSYQSGIQ (304 aa). A PKS/mFAS DH domain is found at 971 to 1275; sequence HDLLGSQVHG…QVSYQSGIQQ (305 aa). The Proton acceptor; for dehydratase activity role is filled by His-1003. Residues 1121-1275 form a C-terminal hotdog fold region; the sequence is MEPQAPRTWY…QVSYQSGIQQ (155 aa). The active-site Proton donor; for dehydratase activity is Asp-1189. The tract at residues 1668–1979 is enoyl reductase (ER) domain; that stretch reads GQIDSIFFRR…AKGHSGSVVV (312 aa). A ketoreductase (KR) domain region spans residues 2004–2180; that stretch reads SYLLVGCLGG…ATSIGLGMIS (177 aa). Residues 2298–2376 form the Carrier domain; sequence SVEDAVLKMI…LLSELITKKM (79 aa). At Ser-2335 the chain carries O-(pantetheine 4'-phosphoryl)serine.

Its function is as follows. Highly reducing polyketide synthase; part of the gene cluster that mediates the biosynthesis of sordarial, a salicylic aldehyde structurally related to the phytotoxin pyriculol. The most interesting aspect of this pathway is formation of an aromatic product from the highly reducing polyketide synthase srdA. SrdA synthesizes a reduced polyketide chain from one molecule of acetyl-CoA and five molecules of malonyl-CoA. The polyketide chain is then reductively released as an aldehyde. The oxidoreductases srdC, srdD and srdE then oxidize one of the hydroxy groups to facilitate the intramolecular aldol condensation, followed by dehydration to yield a salicylic aldehyde. This aldehyde can undergo facile reduction by endogenous reductases to yield the alcohol 1-hydroxy-2-hydroxymethyl-3-pent-1,3-dienylbenzene. The flavin-dependent srdI counteract against the propensity of the aldehydes to be reduced under physiological conditions and is responsible for reoxidizing 1-hydroxy-2-hydroxymethyl-3-pent-1,3-dienylbenzene back to the salicylic aldehyde. This salicylic aldehyde is then selectively epoxidized by the cupin-domain-containing oxidoreductase srdB to yield the epoxide, which can be hydrolyzed stereoselectively by the hydrolase srdG to give the final product sordarial. The protein is Highly reducing polyketide synthase srdA of Neurospora crassa (strain ATCC 24698 / 74-OR23-1A / CBS 708.71 / DSM 1257 / FGSC 987).